Reading from the N-terminus, the 378-residue chain is tRNA-specific 2-thiouridylase MnmA (378 aa).

ATP contacts are provided by residues 9-16 (GVSGGVDS) and Met35. Residues 94–96 (NPD) are interaction with target base in tRNA. Catalysis depends on Cys99, which acts as the Nucleophile. Cys99 and Cys195 are oxidised to a cystine. Gly123 contacts ATP. Residues 145 to 147 (KDQ) form an interaction with tRNA region. The active-site Cysteine persulfide intermediate is Cys195. Positions 307–308 (RY) are interaction with tRNA.

The protein belongs to the MnmA/TRMU family.

It localises to the cytoplasm. It catalyses the reaction S-sulfanyl-L-cysteinyl-[protein] + uridine(34) in tRNA + AH2 + ATP = 2-thiouridine(34) in tRNA + L-cysteinyl-[protein] + A + AMP + diphosphate + H(+). Its function is as follows. Catalyzes the 2-thiolation of uridine at the wobble position (U34) of tRNA, leading to the formation of s(2)U34. The chain is tRNA-specific 2-thiouridylase MnmA from Xanthomonas campestris pv. campestris (strain 8004).